The chain runs to 241 residues: Microneme antigen (241 aa).

The signal sequence occupies residues Met-1–Ser-34. The propeptide occupies Ala-35–His-103. Over residues His-61 to Lys-83 the composition is skewed to basic and acidic residues. Residues His-61–His-92 are disordered. PAN domains are found at residues Cys-112–Cys-181 and Cys-185–Ser-241. 6 cysteine pairs are disulfide-bonded: Cys-112–Cys-181, Cys-137–Cys-159, Cys-141–Cys-147, Cys-185–Cys-189, Cys-210–Cys-230, and Cys-214–Cys-220. Ser-121 is an a carbohydrate binding site. 3 residues coordinate a carbohydrate: Lys-162, Tyr-169, and Asp-174.

The protein belongs to the microneme antigen family. As to quaternary structure, homodimer or heterodimer of major microneme antigen and microneme antigen. Post-translationally, contains six disulfide bonds.

Its subcellular location is the cytoplasmic vesicle. The protein localises to the secretory vesicle. It localises to the microneme. Functionally, galactose-binding lectin. Plays a role in adhesion to the host cell. Has a potential role in invasion of host cells. In Sarcocystis muris, this protein is Microneme antigen.